The following is a 281-amino-acid chain: Type VI secretion system accessory component TagJ (281 aa).

In terms of assembly, interacts with TssB1 (via N-terminus). Interacts with ClpV1.

Functionally, component of the H1 type VI (H1-T6SS) secretion system that plays a role in the release of toxins targeting both eukaryotic and prokaryotic species. Forms a stable complex with TssB1. This complex, although not crucial for the H1-T6SS function, may fine-tune the assembly of the system. Plays a role in the interaction between ClpV1 and the TssC1/TssB1 sheath. In Pseudomonas aeruginosa (strain ATCC 15692 / DSM 22644 / CIP 104116 / JCM 14847 / LMG 12228 / 1C / PRS 101 / PAO1), this protein is Type VI secretion system accessory component TagJ.